The chain runs to 523 residues: FAD:protein FMN transferase (523 aa).

3 helical membrane-spanning segments follow: residues 88 to 108, 118 to 138, and 169 to 189; these read LLAG…VALA, GGAA…LVLL, and GLAL…TAPA. FAD contacts are provided by residues 277 to 279 and Asp336; that span reads LFD. Ala339 is a Mg(2+) binding site. FAD is bound by residues Lys342 and 423 to 425; that span reads HII. Residues Asp450 and Thr454 each coordinate Mg(2+).

This sequence in the N-terminal section; belongs to the RseC family. The protein in the C-terminal section; belongs to the ApbE family. Mg(2+) serves as cofactor.

It is found in the cell membrane. The enzyme catalyses L-threonyl-[protein] + FAD = FMN-L-threonyl-[protein] + AMP + H(+). In terms of biological role, flavin transferase that catalyzes the transfer of the FMN moiety of FAD and its covalent binding to the hydroxyl group of a threonine residue in a target flavoprotein. Is likely involved in the modification of RnfG and RnfD. Required for nitrogen fixation. In Rhodobacter capsulatus (Rhodopseudomonas capsulata), this protein is FAD:protein FMN transferase.